Reading from the N-terminus, the 356-residue chain is Heparan sulfate 2-O-sulfotransferase 1 (356 aa).

Residues 1–11 (MGLLRIMMPPK) are Cytoplasmic-facing. Residues 12-28 (LQLLAVVAFAVAMLFLE) form a helical; Signal-anchor for type II membrane protein membrane-spanning segment. The stretch at 24 to 51 (MLFLENQIQKLEESRSKLERAIARHEVR) forms a coiled coil. Residues 29-356 (NQIQKLEESR…FYEKIYPKSN (328 aa)) lie on the Lumenal side of the membrane. Residues K83, T84, A85, S86, T87, and S88 each contribute to the adenosine 3',5'-bisphosphate site. N108 and N127 each carry an N-linked (GlcNAc...) asparagine glycan. Catalysis depends on residues H140 and H142. Adenosine 3',5'-bisphosphate contacts are provided by R164 and S172. 2 disulfide bridges follow: C201–C209 and C222–C228. Adenosine 3',5'-bisphosphate is bound by residues Y279, S285, T290, and K293.

The protein belongs to the sulfotransferase 3 family. As to quaternary structure, homotrimer. Interacts with the C5-epimerase GLCE. In terms of processing, N-glycosylated.

The protein localises to the golgi apparatus membrane. In terms of biological role, catalyzes the transfer of a sulfo group from 3'-phospho-5'-adenylyl sulfate (PAPS) to the 2-OH position of iduronic acid (IdoA) or glucuronic acid (GlcA) within the heparan sulfate (HS) chain and participates in HS biosynthesis. Required for metanephric development of kidney formation, suggesting that 2-O-sulfation within HS is essential for signaling between ureteric bud and metanephric mesenchyme. The polypeptide is Heparan sulfate 2-O-sulfotransferase 1 (Homo sapiens (Human)).